A 133-amino-acid chain; its full sequence is Holo-[acyl-carrier-protein] synthase (133 aa).

Asp-8 and Glu-57 together coordinate Mg(2+).

The protein belongs to the P-Pant transferase superfamily. AcpS family. It depends on Mg(2+) as a cofactor.

The protein resides in the cytoplasm. It catalyses the reaction apo-[ACP] + CoA = holo-[ACP] + adenosine 3',5'-bisphosphate + H(+). In terms of biological role, transfers the 4'-phosphopantetheine moiety from coenzyme A to a Ser of acyl-carrier-protein. The sequence is that of Holo-[acyl-carrier-protein] synthase from Bartonella tribocorum (strain CIP 105476 / IBS 506).